A 330-amino-acid polypeptide reads, in one-letter code: Chromatin modification-related protein EAF3 (330 aa).

Residues 5–62 form the Tudor-knot domain; the sequence is DGEKVLCFHGPLIYAAKILKAEKWTGEENVTGQVGPHYLVHYDGWKKTWDEWVPETRL. The interval 96 to 129 is disordered; sequence TSAASSLKRAKDSELPDRKSASRGTKRSREHVEA. Positions 104–115 are enriched in basic and acidic residues; it reads RAKDSELPDRKS. In terms of domain architecture, MRG spans 135–329; sequence KRPEVKISLP…ASPAYHRISS (195 aa).

It belongs to the MRG family. Component of the NuA4 histone acetyltransferase complex.

It is found in the nucleus. In terms of biological role, involved in deacetylation of histones, chromatin assembly and chromosome segregation. May act as a transcriptional oscillator, directing histone deacetylases to specific chromosomal domains. Component of the NuA4 histone acetyltransferase complex which is involved in transcriptional activation of selected genes principally by acetylation of nucleosomal histone H4 and H2A. The NuA4 complex is also involved in DNA repair. This is Chromatin modification-related protein EAF3 (EAF3) from Mycosarcoma maydis (Corn smut fungus).